Consider the following 30-residue polypeptide: Brevinin-2Ej (30 aa).

Residues Cys-24 and Cys-30 are joined by a disulfide bond.

Expressed by the skin glands.

The protein resides in the secreted. In terms of biological role, shows antibacterial activity against representative Gram-negative and Gram-positive bacterial species, and hemolytic activity. This chain is Brevinin-2Ej, found in Pelophylax ridibundus (Marsh frog).